The primary structure comprises 256 residues: Receptor expression-enhancing protein 3 (256 aa).

3 helical membrane passes run Met-1–Tyr-21, Trp-42–Phe-62, and Ile-68–Tyr-88. A disordered region spans residues Ile-177 to Ser-256. Positions Asn-247–Ser-256 are enriched in polar residues.

It belongs to the DP1 family.

Its subcellular location is the endoplasmic reticulum membrane. Microtubule-binding protein required to ensure proper cell division and nuclear envelope reassembly by sequestering the endoplasmic reticulum away from chromosomes during mitosis. Probably acts by clearing the endoplasmic reticulum membrane from metaphase chromosomes. In Danio rerio (Zebrafish), this protein is Receptor expression-enhancing protein 3 (reep3).